The following is a 96-amino-acid chain: Putative septation protein SpoVG (96 aa).

Belongs to the SpoVG family.

Functionally, could be involved in septation. This is Putative septation protein SpoVG from Borrelia hermsii (strain HS1 / DAH).